The chain runs to 149 residues: Large ribosomal subunit protein bL9 (149 aa).

Belongs to the bacterial ribosomal protein bL9 family.

In terms of biological role, binds to the 23S rRNA. The polypeptide is Large ribosomal subunit protein bL9 (Legionella pneumophila (strain Lens)).